The chain runs to 551 residues: Membrane protein insertase YidC (551 aa).

The helical transmembrane segment at 3 to 23 (ANHIRILLLVTIAIMFISLMG) threads the bilayer. Residues 33-47 (NTKQQTSATQNNSHY) are compositionally biased toward polar residues. Positions 33-59 (NTKQQTSATQNNSHYDNADSSTNTDVT) are disordered. The segment covering 50–59 (ADSSTNTDVT) has biased composition (low complexity). The next 3 helical transmembrane spans lie at 361–381 (LVGN…LIFY), 431–451 (LSGC…YWVL), and 504–524 (VMMF…SGLV).

Belongs to the OXA1/ALB3/YidC family. Type 1 subfamily. In terms of assembly, interacts with the Sec translocase complex via SecD. Specifically interacts with transmembrane segments of nascent integral membrane proteins during membrane integration.

The protein localises to the cell inner membrane. In terms of biological role, required for the insertion and/or proper folding and/or complex formation of integral membrane proteins into the membrane. Involved in integration of membrane proteins that insert both dependently and independently of the Sec translocase complex, as well as at least some lipoproteins. Aids folding of multispanning membrane proteins. The protein is Membrane protein insertase YidC of Francisella tularensis subsp. mediasiatica (strain FSC147).